A 587-amino-acid chain; its full sequence is UDP-N-acetylmuramoylalanine--D-glutamate ligase (587 aa).

A disordered region spans residues 124 to 147 (DHLVPPESPLSDASDISDASDATD). Residues 132–147 (PLSDASDISDASDATD) show a composition bias toward low complexity. 214-220 (GTNGKTT) provides a ligand contact to ATP.

It belongs to the MurCDEF family.

The protein resides in the cytoplasm. The enzyme catalyses UDP-N-acetyl-alpha-D-muramoyl-L-alanine + D-glutamate + ATP = UDP-N-acetyl-alpha-D-muramoyl-L-alanyl-D-glutamate + ADP + phosphate + H(+). It functions in the pathway cell wall biogenesis; peptidoglycan biosynthesis. In terms of biological role, cell wall formation. Catalyzes the addition of glutamate to the nucleotide precursor UDP-N-acetylmuramoyl-L-alanine (UMA). The chain is UDP-N-acetylmuramoylalanine--D-glutamate ligase from Polaromonas sp. (strain JS666 / ATCC BAA-500).